Here is an 868-residue protein sequence, read N- to C-terminus: Probable mixed-linked glucan synthase 3 (868 aa).

The tract at residues 36 to 68 is disordered; the sequence is ERKAAGGGGGGAKGKHWAAADKGERRAAKECGG. Basic and acidic residues predominate over residues 53–68; the sequence is AAADKGERRAAKECGG. Transmembrane regions (helical) follow at residues 86–106 and 116–136; these read LLHP…LFFG and IMWF…SWLL. D211 is a catalytic residue. D412 and D414 together coordinate substrate. Residue D573 is part of the active site. Transmembrane regions (helical) follow at residues 649 to 669, 686 to 706, 717 to 737, 771 to 791, 809 to 829, and 837 to 857; these read IYPV…MWLI, LLMI…WAGI, FFMI…VVNL, MLIP…VAIG, IMGL…ALAI, and PIIL…VYVA.

The protein belongs to the glycosyltransferase 2 family. Plant cellulose synthase-like F subfamily.

The protein resides in the golgi apparatus membrane. Functionally, may catalyze both beta-1,3 and beta-1,4 glycosidic linkage on beta-D-glucan. Essential for (1,3;1,4)-beta-D-glucans synthesis in grasses and cereals (Poaceae). The mixed-linked glucans (which are not present in walls of dicotyledons or most other monocotyledonous plants) are particularly important constituents of the walls of the starchy endosperm and aleurone cells of cereal grains such as oats, wheat, rice and barley. They can account for up to 70% by weight of the wall. In Oryza sativa subsp. indica (Rice), this protein is Probable mixed-linked glucan synthase 3 (CSLF3).